Here is a 143-residue protein sequence, read N- to C-terminus: Small ribosomal subunit protein uS12 (143 aa).

The protein belongs to the universal ribosomal protein uS12 family. As to quaternary structure, component of the 40S small ribosomal subunit.

The protein localises to the cytoplasm. Its subcellular location is the cytosol. The protein resides in the rough endoplasmic reticulum. This chain is Small ribosomal subunit protein uS12 (rps23), found in Gillichthys mirabilis (Long-jawed mudsucker).